The sequence spans 249 residues: MDINGNAFVVGSGSGIGRACALGLAKGGAKGILIADINLEAANRVATECRGATKYMIEIFERIDYCINCAGIGVQLARNISEADFGEFSRFLQIHVEGTFLLVRSVSAAMQLQELRPIDPTNPGRGGARGSIVTLGSGNSFAAAPHLVQYTAAKHAVLGVTKNAALDNAAHGIRVNCVCPTWVETPMIQSARDGGVEIDSWVKGMVPLGRIATAEEVADTVIFFCSPRSSYATGCGFLLDGGTTLTCHV.

Residues isoleucine 16, arginine 104, tyrosine 150, lysine 154, valine 183, and threonine 185 each coordinate NADP(+). Tyrosine 150 (proton donor) is an active-site residue. Lysine 154 acts as the Lowers pKa of active site Tyr in catalysis.

It belongs to the short-chain dehydrogenases/reductases (SDR) family.

It participates in secondary metabolite biosynthesis. Short-chain dehydrogenase; part of the gene cluster that mediates the biosynthesis of virensols and trichoxide, fungal natural products that contain or are derived from a salicylaldehyde core. The pathway begins with the synthesis of the reduced chain in virensol C by the highly reducing polyketide synthase virA via condensation of one acetate and 8 malonate units. VirA has interesting programming rules since the first 2 ketides are fully reduced, the 3 following ketides undergo beta-dehydration, and the last 3 ketides are only reduced to beta-hydroxys to yield the trihydroxy portion. The production of aldehyde virensol C by virA alone is surprising, since virA does not contain a reductase (R) domain that is typically associated with reductive product release in HRPKS. The cupin-domain enzyme virC is involved in enhancing virA product turnover. The short-chain dehydrogenase virB then oxidizes the C-7 alcohol of virensol C to a ketone, yielding virensol D. Virensol D is further transformed to salicylaldehyde 5-deoxyaurocitrin by the short-chain dehydrogenase virD. VirD catalyzes the dehydrogenation of C-3 to form the beta-ketone aldehyde, which is followed by the generation of the nucleophilic C-2 that is required for the intramolecular aldol condensation between C-2 and C-7, itself followed by dehydration and aromatization which leads to salicylaldehyde 5-deoxyaurocitrin. While the dehydrogenation of virensol D is definitely catalyzed by virD, the aldol condensation and dehydration may be uncatalyzed or assisted by virD. The short chain dehydrogenase virG then converts salicylaldehyde 5-deoxyaurocitrin into virensol B which is further hydroxylated by the cytochrome P450 monooxygenase virE to yield the hydroquinone virensol A. VirI then may oxidize virensol A to form the quinone, while virH performs the epoxidation. Finally, the two remaining short-chain dehydrogenases, virK and virL, are probably responsible for reducing the ketones to the corresponding alcohols to furnish the epoxycyclohexanol structure in trichoxide. In Hypocrea virens (strain Gv29-8 / FGSC 10586) (Gliocladium virens), this protein is Short-chain dehydrogenase virB.